A 69-amino-acid chain; its full sequence is Disintegrin VLO5B (69 aa).

The region spanning 1 to 66 (MNSANPCCDP…DCPRNPWKSE (66 aa)) is the Disintegrin domain. 4 disulfides stabilise this stretch: Cys-7-Cys-30, Cys-21-Cys-27, Cys-26-Cys-51, and Cys-39-Cys-58. The Cell attachment site; atypical (MLD) motif lies at 43 to 45 (MLD).

This sequence belongs to the disintegrin family. Dimeric disintegrin subfamily. As to quaternary structure, heterodimer with VLO5A; disulfide-linked. Expressed by the venom gland.

The protein resides in the secreted. Functionally, poor inhibitor of platelet aggregation. The disintegrin inhibits the adhesion of the alpha-4/beta-1 (ITGA4/ITGB1) integrin to VCAM-1. Inhibition on alpha-2b/beta-3 (ITGA2B/ITGB3) is low. The protein is Disintegrin VLO5B of Macrovipera lebetina obtusa (Levant blunt-nosed viper).